The chain runs to 435 residues: Serine--tRNA ligase (435 aa).

An L-serine-binding site is contributed by 239 to 241; sequence TAE. Residue 270-272 coordinates ATP; the sequence is RAE. Glutamate 293 lines the L-serine pocket. Residue 357 to 360 participates in ATP binding; that stretch reads EISS. Serine 393 is an L-serine binding site.

Belongs to the class-II aminoacyl-tRNA synthetase family. Type-1 seryl-tRNA synthetase subfamily. In terms of assembly, homodimer. The tRNA molecule binds across the dimer.

It localises to the cytoplasm. It carries out the reaction tRNA(Ser) + L-serine + ATP = L-seryl-tRNA(Ser) + AMP + diphosphate + H(+). It catalyses the reaction tRNA(Sec) + L-serine + ATP = L-seryl-tRNA(Sec) + AMP + diphosphate + H(+). The protein operates within aminoacyl-tRNA biosynthesis; selenocysteinyl-tRNA(Sec) biosynthesis; L-seryl-tRNA(Sec) from L-serine and tRNA(Sec): step 1/1. Its function is as follows. Catalyzes the attachment of serine to tRNA(Ser). Is also able to aminoacylate tRNA(Sec) with serine, to form the misacylated tRNA L-seryl-tRNA(Sec), which will be further converted into selenocysteinyl-tRNA(Sec). In Parvibaculum lavamentivorans (strain DS-1 / DSM 13023 / NCIMB 13966), this protein is Serine--tRNA ligase.